We begin with the raw amino-acid sequence, 470 residues long: UDP-N-acetylmuramoylalanine--D-glutamate ligase (470 aa).

Position 121–127 (121–127 (GTNGKST)) interacts with ATP.

The protein belongs to the MurCDEF family.

The protein localises to the cytoplasm. The enzyme catalyses UDP-N-acetyl-alpha-D-muramoyl-L-alanine + D-glutamate + ATP = UDP-N-acetyl-alpha-D-muramoyl-L-alanyl-D-glutamate + ADP + phosphate + H(+). It functions in the pathway cell wall biogenesis; peptidoglycan biosynthesis. Cell wall formation. Catalyzes the addition of glutamate to the nucleotide precursor UDP-N-acetylmuramoyl-L-alanine (UMA). In Rhizobium etli (strain ATCC 51251 / DSM 11541 / JCM 21823 / NBRC 15573 / CFN 42), this protein is UDP-N-acetylmuramoylalanine--D-glutamate ligase.